The primary structure comprises 465 residues: MAP kinase-interacting serine/threonine-protein kinase 1 (465 aa).

Residues 1 to 11 (MVSSQKLEKPI) show a composition bias toward basic and acidic residues. Residues 1 to 40 (MVSSQKLEKPIEMGSSEPLPIADGDRRRKKKRRGRATDSL) form a disordered region. Ser-39 bears the Phosphoserine mark. A Protein kinase domain is found at 49–374 (KLTSELLGEG…AAQVLQHPWV (326 aa)). ATP is bound by residues 55–63 (LGEGAYAKV) and Lys-78. Residues 185–203 (APTSLGSSDPPTSASQVAG) are compositionally biased toward polar residues. The interval 185 to 204 (APTSLGSSDPPTSASQVAGT) is disordered. Asp-211 serves as the catalytic Proton acceptor. Residues Ser-221 and Ser-226 each carry the phosphoserine modification. Residues Thr-250, Thr-255, and Thr-385 each carry the phosphothreonine modification. A disordered region spans residues 446–465 (RRRALAQAGRGEDRSPPTAL). The segment covering 455–465 (RGEDRSPPTAL) has biased composition (basic and acidic residues). Residue Ser-460 is modified to Phosphoserine.

It belongs to the protein kinase superfamily. CAMK Ser/Thr protein kinase family. In terms of assembly, interacts with the C-terminal regions of EIF4G1 and EIF4G2. Also binds to dephosphorylated ERK1 and ERK2, and to the p38 kinases. The cofactor is Mg(2+). Post-translationally, dual phosphorylation of Thr-250 and Thr-255 activates the kinase. Phosphorylation of Thr-385 activates the kinase. MAPK3/ERK1 is one of the kinases which activate MKNK1/MNK1. Phosphorylation by PAK2 leads to a reduced phosphorylation of EIF4G1. In terms of tissue distribution, ubiquitous.

It localises to the cytoplasm. Its subcellular location is the nucleus. It catalyses the reaction L-seryl-[protein] + ATP = O-phospho-L-seryl-[protein] + ADP + H(+). It carries out the reaction L-threonyl-[protein] + ATP = O-phospho-L-threonyl-[protein] + ADP + H(+). Its activity is regulated as follows. Phosphorylated and activated by the p38 kinases and kinases in the Erk pathway. In terms of biological role, may play a role in the response to environmental stress and cytokines. Appears to regulate translation by phosphorylating EIF4E, thus increasing the affinity of this protein for the 7-methylguanosine-containing mRNA cap. This is MAP kinase-interacting serine/threonine-protein kinase 1 (MKNK1) from Homo sapiens (Human).